The chain runs to 639 residues: Chaperone protein DnaK (639 aa).

Phosphothreonine; by autocatalysis is present on T196. The disordered stretch occupies residues 592–639; the sequence is ASSLYQTPDAGAPGASGPSAGGEPETGKKGGDGEVQNAEYEVIDGNDK. The span at 601 to 613 shows a compositional bias: low complexity; that stretch reads AGAPGASGPSAGG.

This sequence belongs to the heat shock protein 70 family.

Its function is as follows. Acts as a chaperone. This chain is Chaperone protein DnaK, found in Chlorobium limicola (strain DSM 245 / NBRC 103803 / 6330).